The following is a 1088-amino-acid chain: Serine/threonine-protein kinase LATS2 (1088 aa).

Residues 24–49 form a disordered region; that stretch reads EGLKQPSKSSVQGLPAGPNSDTSLDA. Ser-83 is subject to Phosphoserine; by AURKA. The UBA domain occupies 98–139; it reads EVNRQMLQELVNAGCDQEMAGRALKQTGSRSIEAALEYISKM. The segment at 101–141 is interaction with ubiquitinated AMOTL2; the sequence is RQMLQELVNAGCDQEMAGRALKQTGSRSIEAALEYISKMGY. Polar residues predominate over residues 271–280; that stretch reads RSPSFQSKTP. A disordered region spans residues 271-323; it reads RSPSFQSKTPPETGGYASLPTKGQGGPPGAGLAFPPPAAGLYVPHPHHKQAGP. Phosphothreonine is present on Thr-279. Position 380 is a phosphoserine (Ser-380). 2 disordered regions span residues 383–428 and 454–483; these read KPGL…SLPA and PQTA…AAEG. Polar residues predominate over residues 404–413; it reads SRTNSFNSHQ. Residues 466 to 478 are compositionally biased toward pro residues; it reads VPAPAPAPAPAPA. The short motif at 515 to 518 is the PPxY motif element; it reads PPPY. The interval 543 to 592 is disordered; the sequence is SLRAGPNEPEGGDKSRKSAKGDKGGKDKKQIQTSPVPVRKNSRDEEKRES. The segment covering 553–572 has biased composition (basic and acidic residues); that stretch reads GGDKSRKSAKGDKGGKDKKQ. Ser-576 is subject to Phosphoserine. Basic and acidic residues predominate over residues 583-592; it reads NSRDEEKRES. One can recognise a Protein kinase domain in the interval 668–973; the sequence is FVKIKTLGIG…ADDLKAHPFF (306 aa). ATP contacts are provided by residues 674–682 and Lys-697; that span reads LGIGAFGEV. Asp-791 acts as the Proton acceptor in catalysis. The region spanning 974–1052 is the AGC-kinase C-terminal domain; it reads SAIDFSSDIR…RRFFDDNGYP (79 aa). Positions 994 to 1022 are disordered; sequence SHPMDTSNFDPVDEESPWNDASEGSTKAW. Position 1041 is a phosphothreonine (Thr-1041). Residues 1056–1088 form a disordered region; it reads PKPSGAEASQAESSDLESSDLVDQTEGCQPVYV.

This sequence belongs to the protein kinase superfamily. AGC Ser/Thr protein kinase family. As to quaternary structure, interacts with and is phosphorylated by AURKA. Binds to AR. Interacts with AJUBA during mitosis and this complex regulates organization of the spindle apparatus through recruitment of gamma-tubulin to the centrosome. Interacts (via PPxY motif) with YAP1 (via WW domains). Interacts with MOB1A and MOB1B. Interacts with LIMD1, WTIP and AJUBA. Interacts with SNAI1. Interacts with WWC1, WWC2 and WWC3 (via their WW domains). Interacts (via UBA domain) with ubiquitinated AMOTL2; the interaction promotes LATS2 phosphorylation of YAP1. It depends on Mg(2+) as a cofactor. In terms of processing, autophosphorylated and phosphorylated during M-phase and the G1/S-phase of the cell cycle. Phosphorylated and activated by STK3/MST2. Phosphorylated by MAP4Ks; in parallel to STK3/MST2 and resulting to its activation. Phosphorylation by NUAK2 may regulate its activity in phosphorylation and inactivation YAP1. In terms of tissue distribution, expressed at high levels in heart and skeletal muscle and at lower levels in all other tissues examined.

The protein localises to the cytoplasm. It is found in the cytoskeleton. Its subcellular location is the microtubule organizing center. It localises to the centrosome. The protein resides in the spindle pole. The protein localises to the nucleus. The enzyme catalyses L-seryl-[protein] + ATP = O-phospho-L-seryl-[protein] + ADP + H(+). The catalysed reaction is L-threonyl-[protein] + ATP = O-phospho-L-threonyl-[protein] + ADP + H(+). Negative regulator of YAP1 in the Hippo signaling pathway that plays a pivotal role in organ size control and tumor suppression by restricting proliferation and promoting apoptosis. The core of this pathway is composed of a kinase cascade wherein STK3/MST2 and STK4/MST1, in complex with its regulatory protein SAV1, phosphorylates and activates LATS1/2 in complex with its regulatory protein MOB1, which in turn phosphorylates and inactivates YAP1 oncoprotein and WWTR1/TAZ. Phosphorylation of YAP1 by LATS2 inhibits its translocation into the nucleus to regulate cellular genes important for cell proliferation, cell death, and cell migration. Also phosphorylates YAP1 in response to cell contact inhibition-driven WWP1 ubiquitination of AMOTL2, which results in LATS2 activation. Acts as a tumor suppressor which plays a critical role in centrosome duplication, maintenance of mitotic fidelity and genomic stability. Negatively regulates G1/S transition by down-regulating cyclin E/CDK2 kinase activity. Negative regulator of the androgen receptor. Phosphorylates SNAI1 in the nucleus leading to its nuclear retention and stabilization, which enhances its epithelial-mesenchymal transition and tumor cell invasion/migration activities. This tumor-promoting activity is independent of its effects upon YAP1 or WWTR1/TAZ. Acts as an activator of the NLRP3 inflammasome by mediating phosphorylation of 'Ser-265' of NLRP3 following NLRP3 palmitoylation, promoting NLRP3 activation by NEK7. The protein is Serine/threonine-protein kinase LATS2 of Homo sapiens (Human).